The chain runs to 397 residues: Endoglucanase (397 aa).

The active-site Proton donor is E194. E317 acts as the Nucleophile in catalysis.

The protein belongs to the glycosyl hydrolase 5 (cellulase A) family.

It carries out the reaction Endohydrolysis of (1-&gt;4)-beta-D-glucosidic linkages in cellulose, lichenin and cereal beta-D-glucans.. This Paenibacillus polymyxa (Bacillus polymyxa) protein is Endoglucanase.